Consider the following 580-residue polypeptide: Glutamine--tRNA ligase (580 aa).

The short motif at 41 to 51 (PEPNGYLHIGH) is the 'HIGH' region element. Residues 42-44 (EPN) and 48-54 (HIGHAKA) each bind ATP. D74 and Y218 together coordinate L-glutamine. ATP contacts are provided by residues T237, 285–286 (RL), and 293–295 (MSK). A 'KMSKS' region motif is present at residues 292 to 296 (VMSKR).

The protein belongs to the class-I aminoacyl-tRNA synthetase family. In terms of assembly, monomer.

It is found in the cytoplasm. The catalysed reaction is tRNA(Gln) + L-glutamine + ATP = L-glutaminyl-tRNA(Gln) + AMP + diphosphate. This is Glutamine--tRNA ligase from Xylella fastidiosa (strain Temecula1 / ATCC 700964).